The following is a 305-amino-acid chain: Olfactory receptor 4F17 (305 aa).

At 1–18 (MVTEFIFLGLSDSQGLQT) the chain is on the extracellular side. Residues 19–42 (FLFMLFFVFYGGIVFGNLLIVITV) form a helical membrane-spanning segment. The Cytoplasmic portion of the chain corresponds to 43-50 (VSDSHLHS). The chain crosses the membrane as a helical span at residues 51–72 (PMYFLLANLSLIDLSLSSVTAP). At 73–93 (KMITDFFSQRKVISFKGCLVQ) the chain is on the extracellular side. A disulfide bond links Cys-90 and Cys-182. A helical transmembrane segment spans residues 94-113 (IFLLHFFGGSEMVILIAMGF). At 114-132 (DRYIAICKPLHYTTIMCGN) the chain is on the cytoplasmic side. A helical transmembrane segment spans residues 133-151 (ACVGIMAVAWGIGFLHSVS). Residues 152-188 (QLAFAVHLPFCGPNEVDSFYCDLPRVIKLACTDTYRL) lie on the Extracellular side of the membrane. Residues 189–212 (DIMVIANSGVLTVCSFVLLIISYT) form a helical membrane-spanning segment. The Cytoplasmic portion of the chain corresponds to 213-228 (IILMTIQHRPLDKSSK). A helical membrane pass occupies residues 229-251 (ALSTLTAHITVVLLFFGPCVFIY). Over 252–262 (AWPFPIKSLDK) the chain is Extracellular. A helical transmembrane segment spans residues 263–282 (FLAVFYSVITPLLNPIIYTL). The Cytoplasmic portion of the chain corresponds to 283-305 (RNKDMKTAIRQLRKWDAHSSVKF).

It belongs to the G-protein coupled receptor 1 family.

The protein localises to the cell membrane. Odorant receptor. This Homo sapiens (Human) protein is Olfactory receptor 4F17 (OR4F17).